The sequence spans 119 residues: Large ribosomal subunit protein uL24 (119 aa).

It belongs to the universal ribosomal protein uL24 family. As to quaternary structure, part of the 50S ribosomal subunit.

Functionally, one of two assembly initiator proteins, it binds directly to the 5'-end of the 23S rRNA, where it nucleates assembly of the 50S subunit. One of the proteins that surrounds the polypeptide exit tunnel on the outside of the subunit. The sequence is that of Large ribosomal subunit protein uL24 from Arthrobacter sp. (strain FB24).